Consider the following 374-residue polypeptide: Actin-related protein 2/3 complex subunit 2B (374 aa).

This sequence belongs to the ARPC2 family. In terms of assembly, component of the Arp2/3 complex composed of ARP2, ARP3, ARPC1/p41-ARC, ARPC2/p34-ARC, ARPC3/p21-ARC, ARPC4/p20-ARC and ARPC5/p16-ARC. In terms of tissue distribution, expressed at low levels in all tissues with a relatively highest expression in inflorescences.

The protein localises to the cytoplasm. The protein resides in the cytoskeleton. Its subcellular location is the cell projection. In terms of biological role, functions as actin-binding component of the Arp2/3 complex which is involved in regulation of actin polymerization and together with an activating nucleation-promoting factor (NPF) mediates the formation of branched actin networks. Seems to contact the mother actin filament. Arp2/3 complex plays a critical role in the control of cell morphogenesis via the modulation of cell polarity development. The polypeptide is Actin-related protein 2/3 complex subunit 2B (ARPC2B) (Arabidopsis thaliana (Mouse-ear cress)).